We begin with the raw amino-acid sequence, 102 residues long: uncharacterized protein (102 aa).

Transmembrane regions (helical) follow at residues 33 to 55 and 57 to 79; these read VLEL…LVVL and VVGV…VVVA.

It localises to the membrane. This is an uncharacterized protein from Saccharomyces cerevisiae (strain ATCC 204508 / S288c) (Baker's yeast).